A 942-amino-acid chain; its full sequence is MSEYKDTLNLPETGFPMRGNLANREPEMLKRWYKEDLYGEIRKAKKGKKSFVLHDGPPYANGDIHIGHALNKILKDIIIKSKTLSGFDAPYIPGWDCHGLPIELMVEKKVGKPGQKVTAAEFREKCREYAAGQVEGQKESFKRLGIMGEWDKPYRTMDFATEANIIRALGKIASKGHLLKGFKPVHWCTDCGSALAEAEVEYKDKVSPSIDVRFKAADEAALLSKFELTEGHEGQGDISIVIWTTTPWTLPANRAVCLRDDLEYVLIQTEGDNAERIIVAAELAKDVMDRAGIEHFHNLGFAKGADLELSQFQHPFYDFTVPAILGDHVTTDSGTGVVHTAPGHGQEDFAVGNKYNLEVANPVGSNGVYLPDTELFAGQHVFKANDAVVEVLKEKGALLHHHAYEHSYPHCWRHKTPIIFRATPQWFVSMDQAGLRAKALESIKNVEWMPEWGQSRIEGMIEGRPEWCISRQRTWGVPIALFVHKETAELHPNTLELIEKVAKLVEEKGIQAWWDVDAAELLGADADQYEKVLDTLDVWFDSGVTHFSVVDAREEYNGNSADLYLEGSDQHRGWFQSSLISSIAMKDEAPYKQVLTHGFVVDGHGRKMSKSIGNVVAPKDVTNKLGADILRLWVASTDYTGEVAVSDEILKRSADAYRRIRNTARFFLANLSGFNPETDIVPVEEMVALDRWAVGRALAAQEEIVKAYEEYNTHGVTQRLMQFCSIEMGSFYLDVIKDRQYTAKRGGNAQRSCQTALYYIVEALVRWMAPIMSFTADEIWNEMPGQRDKFVFTGEWFDGLFGLAEGEELNNEFWTEIQAVRGAVNKLLEDARKEKTIGGALQAEVTLFADDALAAKINKLEDELRFVLLTSAAKVKPLGEKTDAAQATDIEGLFVEVAAAEGEKCDRCWHHTPDVGTIEGHEKICGRCVSNVDGEGEVRKFA.

The 'HIGH' region motif lies at 58–68 (PYANGDIHIGH). E566 serves as a coordination point for L-isoleucyl-5'-AMP. The 'KMSKS' region motif lies at 607-611 (KMSKS). K610 is an ATP binding site. The Zn(2+) site is built by C905, C908, C925, and C928.

Belongs to the class-I aminoacyl-tRNA synthetase family. IleS type 1 subfamily. Monomer. The cofactor is Zn(2+).

The protein resides in the cytoplasm. The enzyme catalyses tRNA(Ile) + L-isoleucine + ATP = L-isoleucyl-tRNA(Ile) + AMP + diphosphate. Catalyzes the attachment of isoleucine to tRNA(Ile). As IleRS can inadvertently accommodate and process structurally similar amino acids such as valine, to avoid such errors it has two additional distinct tRNA(Ile)-dependent editing activities. One activity is designated as 'pretransfer' editing and involves the hydrolysis of activated Val-AMP. The other activity is designated 'posttransfer' editing and involves deacylation of mischarged Val-tRNA(Ile). This chain is Isoleucine--tRNA ligase, found in Vibrio campbellii (strain ATCC BAA-1116).